Reading from the N-terminus, the 766-residue chain is Protein STB6 (766 aa).

Residues 447-469 form a disordered region; that stretch reads VPSEQLTTSNKEDSDTQPTKRNS. At serine 514 the chain carries Phosphoserine.

It to yeast STB2.

Its function is as follows. Binds to SIN3. This Saccharomyces cerevisiae (strain ATCC 204508 / S288c) (Baker's yeast) protein is Protein STB6 (STB6).